The sequence spans 105 residues: Imizoquin biosynthesis cluster protein I (105 aa).

Over residues 1–15 (MSSGEPTTMTPSPSE) the composition is skewed to polar residues. Residues 1–43 (MSSGEPTTMTPSPSERTPLLSNGSGGAADDGGTTVTISKPNDG) are disordered.

Its pathway is secondary metabolite biosynthesis. In terms of biological role, part of the gene cluster that mediates the biosynthesis of imizoquins A to D, tripeptide-derived alkaloids that serve a protective role against oxidative stress that are essential for normal germination. ImqB is a canonical three-module NRPS that assembles the tripeptide backbone of the imizoquins via condensation of Trp, Tyr, and Leu-derived precursors. N-methylation by imqF and phenol oxidation by imqC, followed by cyclization via the FAD-dependent oxidase imqH carry out the three-step transformation of L-tyrosine into tetrahydroisoquinoline. Importantly, this sequence requires the presence of a free amine in the tyrosine moiety, indicating that isoquinoline formation occurs prior to peptide bond formation. The imidazolidin-4-one ring of imizoquins could form following additional oxidation of the methyl-derived bridgehead carbon by imqH. Lastly, O-methylation by imqG and leucine hydroxylation by imqE complete biosynthesis of the imizoquins. This Aspergillus flavus (strain ATCC 200026 / FGSC A1120 / IAM 13836 / NRRL 3357 / JCM 12722 / SRRC 167) protein is Imizoquin biosynthesis cluster protein I.